A 700-amino-acid polypeptide reads, in one-letter code: MARKTPIERYRNIGISAHIDAGKTTTTERILFYTGVNHKIGEVHDGAATMDWMEQEQERGITITSAATTAFWKGMAGDRAEHRINIIDTPGHVDFTIEVERSMRVLDGACMVYCAVGGVQPQSETVWRQANKYKVPRLAFINKMDRTGANFFKVYDQLKLRLKANPVPVVVPIGAEENFTGVVDLLKMKAIIWDEASQGTKFSYEEIPAELVDSCNEWREKMVEAAAESSEDLMNKYLEEGELTEAEIVKGLRDRTIACEIQPMLCGTAFKNKGVQRMLDAVLDFLPSPIDIPPVTGELENGEKGERRAADDEKFSALAFKIMTDPFVGQLIFFRVYSGVVNSGDTVLNATKDKKERLGRILQMHANQREEIKEVRAGDIAAAVGLKDATTGDTLCDPQSPIVLERMIFPEPVISQAVEPKTKPDQEKMGLALNRLAQEDPSFRVQTDEESGQTIISGMGELHLEILVDRMKREFGVEATVGKPQVAYRETIRGKAEDVDGKFVKQSGGRGQYGHAVITLEPNEQGKGYEFLDEIKGGVIPREYIPAVDKGIQETLKAGVLAGFPVVDVKVHLTFGSYHDVDSNENAFRMAGSMAFKEAMRKAQPVILEPMMAVEVETPEDYMGNVMGDLSGRRGIVQGMDDMVGGGKIVRAEVPLSEMFGYSTSLRSLTQGRATYTMEFKHYSEAPRNVSEAIINAKSK.

Residues 8-290 (ERYRNIGISA…AVLDFLPSPI (283 aa)) enclose the tr-type G domain. Residues 17–24 (AHIDAGKT), 88–92 (DTPGH), and 142–145 (NKMD) each bind GTP.

It belongs to the TRAFAC class translation factor GTPase superfamily. Classic translation factor GTPase family. EF-G/EF-2 subfamily.

It localises to the cytoplasm. Functionally, catalyzes the GTP-dependent ribosomal translocation step during translation elongation. During this step, the ribosome changes from the pre-translocational (PRE) to the post-translocational (POST) state as the newly formed A-site-bound peptidyl-tRNA and P-site-bound deacylated tRNA move to the P and E sites, respectively. Catalyzes the coordinated movement of the two tRNA molecules, the mRNA and conformational changes in the ribosome. In Paraburkholderia xenovorans (strain LB400), this protein is Elongation factor G 2.